The chain runs to 505 residues: Histidine ammonia-lyase (505 aa).

A cross-link (5-imidazolinone (Ala-Gly)) is located at residues 141 to 143; that stretch reads ASG. 2,3-didehydroalanine (Ser) is present on Ser142.

The protein belongs to the PAL/histidase family. In terms of processing, contains an active site 4-methylidene-imidazol-5-one (MIO), which is formed autocatalytically by cyclization and dehydration of residues Ala-Ser-Gly.

Its subcellular location is the cytoplasm. The catalysed reaction is L-histidine = trans-urocanate + NH4(+). The protein operates within amino-acid degradation; L-histidine degradation into L-glutamate; N-formimidoyl-L-glutamate from L-histidine: step 1/3. The protein is Histidine ammonia-lyase of Bacillus anthracis.